A 605-amino-acid chain; its full sequence is Sulfite reductase [NADPH] flavoprotein alpha-component (605 aa).

The Flavodoxin-like domain maps to 68-206; sequence VTVLYGSQTG…PAAEWLEGVL (139 aa). Residues 74–78, 121–126, and 154–185 contribute to the FMN site; these read SQTGN, STHGEG, and VLALGDSSYEFFCQTGKEFDQRLEELGGKRIS. The disordered stretch occupies residues 213-234; it reads GGGSAAPAPAAASQTGESSYSR. The FAD-binding FR-type domain occupies 235–454; it reads TNPFRAEVLE…VQHNQNFKLP (220 aa). 392-395 serves as a coordination point for FAD; the sequence is RLYS. Residues Asp-495 and 525 to 533 each bind NADP(+); that span reads SRDTEEKVY.

Alpha(8)-beta(8). The alpha component is a flavoprotein, the beta component is a hemoprotein. FAD serves as cofactor. The cofactor is FMN.

The enzyme catalyses hydrogen sulfide + 3 NADP(+) + 3 H2O = sulfite + 3 NADPH + 4 H(+). It participates in sulfur metabolism; hydrogen sulfide biosynthesis; hydrogen sulfide from sulfite (NADPH route): step 1/1. Component of the sulfite reductase complex that catalyzes the 6-electron reduction of sulfite to sulfide. This is one of several activities required for the biosynthesis of L-cysteine from sulfate. The flavoprotein component catalyzes the electron flow from NADPH -&gt; FAD -&gt; FMN to the hemoprotein component. The chain is Sulfite reductase [NADPH] flavoprotein alpha-component (cysJ) from Bacillus subtilis (strain 168).